Consider the following 353-residue polypeptide: 4-hydroxy-3-methylbut-2-en-1-yl diphosphate synthase (flavodoxin) (353 aa).

Residues cysteine 265, cysteine 268, cysteine 300, and glutamate 307 each coordinate [4Fe-4S] cluster.

This sequence belongs to the IspG family. Requires [4Fe-4S] cluster as cofactor.

It catalyses the reaction (2E)-4-hydroxy-3-methylbut-2-enyl diphosphate + oxidized [flavodoxin] + H2O + 2 H(+) = 2-C-methyl-D-erythritol 2,4-cyclic diphosphate + reduced [flavodoxin]. It functions in the pathway isoprenoid biosynthesis; isopentenyl diphosphate biosynthesis via DXP pathway; isopentenyl diphosphate from 1-deoxy-D-xylulose 5-phosphate: step 5/6. Functionally, converts 2C-methyl-D-erythritol 2,4-cyclodiphosphate (ME-2,4cPP) into 1-hydroxy-2-methyl-2-(E)-butenyl 4-diphosphate. The chain is 4-hydroxy-3-methylbut-2-en-1-yl diphosphate synthase (flavodoxin) from Sulfurihydrogenibium sp. (strain YO3AOP1).